The following is a 426-amino-acid chain: Serine--tRNA ligase (426 aa).

233–235 (TAE) contacts L-serine. 264-266 (RSE) contributes to the ATP binding site. Position 287 (E287) interacts with L-serine. 351-354 (EISS) contacts ATP. S387 lines the L-serine pocket.

This sequence belongs to the class-II aminoacyl-tRNA synthetase family. Type-1 seryl-tRNA synthetase subfamily. In terms of assembly, homodimer. The tRNA molecule binds across the dimer.

The protein resides in the cytoplasm. The catalysed reaction is tRNA(Ser) + L-serine + ATP = L-seryl-tRNA(Ser) + AMP + diphosphate + H(+). The enzyme catalyses tRNA(Sec) + L-serine + ATP = L-seryl-tRNA(Sec) + AMP + diphosphate + H(+). It participates in aminoacyl-tRNA biosynthesis; selenocysteinyl-tRNA(Sec) biosynthesis; L-seryl-tRNA(Sec) from L-serine and tRNA(Sec): step 1/1. Its function is as follows. Catalyzes the attachment of serine to tRNA(Ser). Is also able to aminoacylate tRNA(Sec) with serine, to form the misacylated tRNA L-seryl-tRNA(Sec), which will be further converted into selenocysteinyl-tRNA(Sec). This Clostridium botulinum (strain Hall / ATCC 3502 / NCTC 13319 / Type A) protein is Serine--tRNA ligase.